A 121-amino-acid chain; its full sequence is Putative iron-sulfur cluster insertion protein ErpA (121 aa).

Iron-sulfur cluster-binding residues include C49, C113, and C115.

This sequence belongs to the HesB/IscA family. Homodimer. The cofactor is iron-sulfur cluster.

Required for insertion of 4Fe-4S clusters. This is Putative iron-sulfur cluster insertion protein ErpA from Verminephrobacter eiseniae (strain EF01-2).